The sequence spans 379 residues: MSKRDYYEVLGVEKSASERDIKKAYKRLAMKYHPDRTQGDKAMEEKFKEVQEAYEILTDSQKRAAYDQYGHAGVDPNRGHGGGHGAGDFGDIFGDVFGDIFGGGRGGGRQSRAARGSDLRYNLELSLEEAVRGKSVEIRVPTLAECDTCDGSGAKKGSSAKTCTTCHGQGQVQMRQGFFAVQQACPTCGGKGKIITDPCDVCHGQGRVEKTKTLSVKVPAGVDTGDRIRLSNEGEAGENGAPAGDLYVQVHVKQHKIFERDGNNLYCEVPLSFTRAAIGGEIEVPTLEGKVKLKVTPETQTGKMFRLRNKGVKSVRSGSVGDLICKVVIETPVNLNSRQKELLQELEESMGKGKETAKNRPKESGFFDGVKKFFDDLTN.

The J domain occupies 5–70 (DYYEVLGVEK…QKRAAYDQYG (66 aa)). A CR-type zinc finger spans residues 133–211 (GKSVEIRVPT…CHGQGRVEKT (79 aa)). Residues Cys146, Cys149, Cys163, Cys166, Cys185, Cys188, Cys199, and Cys202 each coordinate Zn(2+). CXXCXGXG motif repeat units lie at residues 146-153 (CDTCDGSG), 163-170 (CTTCHGQG), 185-192 (CPTCGGKG), and 199-206 (CDVCHGQG).

Belongs to the DnaJ family. As to quaternary structure, homodimer. Requires Zn(2+) as cofactor.

The protein resides in the cytoplasm. Its function is as follows. Participates actively in the response to hyperosmotic and heat shock by preventing the aggregation of stress-denatured proteins and by disaggregating proteins, also in an autonomous, DnaK-independent fashion. Unfolded proteins bind initially to DnaJ; upon interaction with the DnaJ-bound protein, DnaK hydrolyzes its bound ATP, resulting in the formation of a stable complex. GrpE releases ADP from DnaK; ATP binding to DnaK triggers the release of the substrate protein, thus completing the reaction cycle. Several rounds of ATP-dependent interactions between DnaJ, DnaK and GrpE are required for fully efficient folding. Also involved, together with DnaK and GrpE, in the DNA replication of plasmids through activation of initiation proteins. The sequence is that of Chaperone protein DnaJ from Pseudoalteromonas atlantica (strain T6c / ATCC BAA-1087).